The sequence spans 592 residues: Bifunctional dolabella-3,7-dien-18-ol synthase/dolathalia-3,7,11-triene synthase TPS20, chloroplastic (592 aa).

The N-terminal 52 residues, 1-52, are a transit peptide targeting the chloroplast; it reads MEAITKNGSLSQTLVHCGPKSLSSFIPVRCLRFSKNPFPKKLVVTRARTSIN. Mg(2+)-binding residues include D349, D353, D491, T495, and E499. Residues 349-353 carry the DDXXD motif motif; the sequence is DDLYD.

This sequence belongs to the terpene synthase family. Tpsa subfamily. The cofactor is Mg(2+). It depends on Mn(2+) as a cofactor.

Its subcellular location is the plastid. The protein localises to the chloroplast. The catalysed reaction is (2E,6E,10E)-geranylgeranyl diphosphate + H2O = (3E,7E)-dolabella-3,7-dien-18-ol + diphosphate. It carries out the reaction (2E,6E,10E)-geranylgeranyl diphosphate = (3E,7E)-dolathalia-3,7,11-triene + diphosphate. Its pathway is secondary metabolite biosynthesis; terpenoid biosynthesis. Its function is as follows. Involved in the biosynthesis of diterpenes in roots. Possesses dolabella-3,7-dien-18-ol synthase activity and dolathalia-3,7,11-triene synthase activity in vitro. Catalyzes the formation of dolabella-3,7-dien-18-ol and dolathalia-3,7,11-triene from geranygeranyl diphosphate (GGPP). Does not seem to be involved in sesquiterpene biosynthesis. This Arabidopsis thaliana (Mouse-ear cress) protein is Bifunctional dolabella-3,7-dien-18-ol synthase/dolathalia-3,7,11-triene synthase TPS20, chloroplastic.